A 122-amino-acid polypeptide reads, in one-letter code: Fluoride-specific ion channel FluC (122 aa).

The next 4 membrane-spanning stretches (helical) occupy residues 6 to 26, 33 to 53, 60 to 80, and 101 to 121; these read LVVG…INLV, SISL…GLLF, GLSP…FTTF, and LNII…FIIF. Na(+) contacts are provided by G75 and T78.

Belongs to the fluoride channel Fluc/FEX (TC 1.A.43) family.

It is found in the cell inner membrane. The catalysed reaction is fluoride(in) = fluoride(out). With respect to regulation, na(+) is not transported, but it plays an essential structural role and its presence is essential for fluoride channel function. In terms of biological role, fluoride-specific ion channel. Important for reducing fluoride concentration in the cell, thus reducing its toxicity. The protein is Fluoride-specific ion channel FluC of Campylobacter jejuni subsp. jejuni serotype O:6 (strain 81116 / NCTC 11828).